A 180-amino-acid polypeptide reads, in one-letter code: Adenine phosphoribosyltransferase (180 aa).

Ala-2 carries the post-translational modification N-acetylalanine. A phosphoserine mark is found at Ser-4, Ser-15, and Ser-30. Tyr-60 bears the Phosphotyrosine mark. The residue at position 66 (Ser-66) is a Phosphoserine. At Lys-114 the chain carries N6-acetyllysine. Residue Thr-135 is modified to Phosphothreonine.

The protein belongs to the purine/pyrimidine phosphoribosyltransferase family. Homodimer.

It localises to the cytoplasm. It catalyses the reaction AMP + diphosphate = 5-phospho-alpha-D-ribose 1-diphosphate + adenine. It functions in the pathway purine metabolism; AMP biosynthesis via salvage pathway; AMP from adenine: step 1/1. Functionally, catalyzes a salvage reaction resulting in the formation of AMP, that is energically less costly than de novo synthesis. The chain is Adenine phosphoribosyltransferase from Cricetulus griseus (Chinese hamster).